We begin with the raw amino-acid sequence, 79 residues long: Acyl carrier protein (79 aa).

The Carrier domain maps to 2–77 (SDIEQRVKKI…QAIDYAKAHV (76 aa)). Ser-37 bears the O-(pantetheine 4'-phosphoryl)serine mark.

It belongs to the acyl carrier protein (ACP) family. Post-translationally, 4'-phosphopantetheine is transferred from CoA to a specific serine of apo-ACP by AcpS. This modification is essential for activity because fatty acids are bound in thioester linkage to the sulfhydryl of the prosthetic group.

The protein resides in the cytoplasm. Its pathway is lipid metabolism; fatty acid biosynthesis. Carrier of the growing fatty acid chain in fatty acid biosynthesis. The polypeptide is Acyl carrier protein (Janthinobacterium sp. (strain Marseille) (Minibacterium massiliensis)).